Reading from the N-terminus, the 338-residue chain is Anthranilate phosphoribosyltransferase (338 aa).

Residues glycine 81, glycine 84–aspartate 85, serine 89, asparagine 91–threonine 94, lysine 109–serine 117, and alanine 121 contribute to the 5-phospho-alpha-D-ribose 1-diphosphate site. Glycine 81 contributes to the anthranilate binding site. Serine 93 contacts Mg(2+). Asparagine 112 serves as a coordination point for anthranilate. Arginine 167 contributes to the anthranilate binding site. Residues aspartate 226 and glutamate 227 each contribute to the Mg(2+) site.

It belongs to the anthranilate phosphoribosyltransferase family. Homodimer. Requires Mg(2+) as cofactor.

The catalysed reaction is N-(5-phospho-beta-D-ribosyl)anthranilate + diphosphate = 5-phospho-alpha-D-ribose 1-diphosphate + anthranilate. Its pathway is amino-acid biosynthesis; L-tryptophan biosynthesis; L-tryptophan from chorismate: step 2/5. Functionally, catalyzes the transfer of the phosphoribosyl group of 5-phosphorylribose-1-pyrophosphate (PRPP) to anthranilate to yield N-(5'-phosphoribosyl)-anthranilate (PRA). This is Anthranilate phosphoribosyltransferase from Rhodopseudomonas palustris (strain TIE-1).